We begin with the raw amino-acid sequence, 648 residues long: Replication protein E1 (648 aa).

A Nuclear localization signal motif is present at residues 83 to 85; it reads KRK. A phosphoserine; by host mark is found at S89, S93, and S107. The Nuclear export signal motif lies at 106-115; it reads ISPRLDAIQL. Positions 151–186 are disordered; sequence YGEPENGCGGGGDGREKEGEGQVHTEVHTESEIEQH. Over residues 163–185 the composition is skewed to basic and acidic residues; that stretch reads DGREKEGEGQVHTEVHTESEIEQ. The interval 184–352 is DNA-binding region; that stretch reads EQHTGTTRVL…QTIVEHGLAD (169 aa). Positions 451 to 601 constitute an SF3 helicase domain; that stretch reads IEFISFLSKL…FPFDSNGNAV (151 aa). An ATP-binding site is contributed by 477-484; the sequence is GPPDTGKS. Residue K558 forms a Glycyl lysine isopeptide (Lys-Gly) (interchain with G-Cter in SUMO) linkage.

It belongs to the papillomaviridae E1 protein family. Can form hexamers. Interacts with E2 protein; this interaction increases E1 DNA binding specificity. Interacts with host DNA polymerase subunit POLA2. Interacts with host single stranded DNA-binding protein RPA1. Interacts with host TOP1; this interaction stimulates the enzymatic activity of TOP1. Phosphorylated. Post-translationally, sumoylated.

It localises to the host nucleus. The enzyme catalyses Couples ATP hydrolysis with the unwinding of duplex DNA by translocating in the 3'-5' direction.. The catalysed reaction is ATP + H2O = ADP + phosphate + H(+). In terms of biological role, ATP-dependent DNA 3'-5' helicase required for initiation of viral DNA replication. It forms a complex with the viral E2 protein. The E1-E2 complex binds to the replication origin which contains binding sites for both proteins. During the initial step, a dimer of E1 interacts with a dimer of protein E2 leading to a complex that binds the viral origin of replication with high specificity. Then, a second dimer of E1 displaces the E2 dimer in an ATP-dependent manner to form the E1 tetramer. Following this, two E1 monomers are added to each half of the site, which results in the formation of two E1 trimers on the viral ori. Subsequently, two hexamers will be created. The double hexamer acts as a bi-directional helicase machinery and unwinds the viral DNA and then recruits the host DNA polymerase to start replication. The polypeptide is Replication protein E1 (Pygmy chimpanzee papillomavirus type 1C (PCPV-1C)).